The chain runs to 645 residues: Sister chromatid cohesion protein 1 (645 aa).

Disordered regions lie at residues 292–311 (FEPE…FALE), 495–527 (QSGF…GQLE), and 619–645 (CPLS…MRPV).

It belongs to the rad21 family. As to quaternary structure, component of the cohesin complex, composed of the smc-1 and smc-3 heterodimer attached via their hinge domain, scc-1 which links them, and scc-3. Interacts with smc-1, smc-3, scc-3 and tim-1.

It localises to the nucleus. The protein localises to the chromosome. Its subcellular location is the cytoplasm. In terms of biological role, cleavable component of the cohesin complex involved in chromosome cohesion during cell cycle. The cohesin complex is required for the cohesion of sister chromatids after DNA replication. The cohesin complex apparently forms a large proteinaceous ring within which sister chromatids can be trapped. At metaphase-anaphase transition, this protein is cleaved and dissociates from chromatin, allowing sister chromatids to segregate. This Caenorhabditis elegans protein is Sister chromatid cohesion protein 1.